The primary structure comprises 253 residues: Ribosome maturation factor RimP (253 aa).

Positions 186–199 are enriched in basic and acidic residues; it reads RRGKAAEREKKRDL. Residues 186-253 are disordered; that stretch reads RRGKAAEREK…RARRGEIDPD (68 aa). Positions 201 to 216 are enriched in low complexity; the sequence is LAPPLAPHAKPAAQAK. Over residues 240–253 the composition is skewed to basic and acidic residues; the sequence is LAADRARRGEIDPD.

Belongs to the RimP family.

The protein localises to the cytoplasm. In terms of biological role, required for maturation of 30S ribosomal subunits. The polypeptide is Ribosome maturation factor RimP (Bradyrhizobium sp. (strain BTAi1 / ATCC BAA-1182)).